Here is a 363-residue protein sequence, read N- to C-terminus: Ribosomal RNA large subunit methyltransferase M (363 aa).

S-adenosyl-L-methionine is bound by residues Ser-187, 220 to 223 (CPGG), Asp-239, Asp-259, and Asp-276. Catalysis depends on Lys-305, which acts as the Proton acceptor.

This sequence belongs to the class I-like SAM-binding methyltransferase superfamily. RNA methyltransferase RlmE family. RlmM subfamily. As to quaternary structure, monomer.

The protein localises to the cytoplasm. It catalyses the reaction cytidine(2498) in 23S rRNA + S-adenosyl-L-methionine = 2'-O-methylcytidine(2498) in 23S rRNA + S-adenosyl-L-homocysteine + H(+). Its function is as follows. Catalyzes the 2'-O-methylation at nucleotide C2498 in 23S rRNA. This Shewanella loihica (strain ATCC BAA-1088 / PV-4) protein is Ribosomal RNA large subunit methyltransferase M.